Consider the following 371-residue polypeptide: MTAPARRLCHIAFHVPAGQPLARDLHRVFGFQPLAVREAGGWRQLALRSGDAVFLVNEGTGPQEPLYSLDPHHSVPSATNLCFDVEDVDGAARALAARGCIMPVPPTRVRDAQGTATYTVLSSPAGNLSLTLLQRAGYRGSFLPGFRPLPCTPGPGWVSHVDHLTLACTSGSSPMLMRWFHDCLGFHHLPLSPGEDPEMGLKVAAGSGRGGLRLTALQTPPNNTVPTLVLAESLPGLNSKQDQVEQFLTRHGGPGLQHVGLYTPNIIDASEGMAKAGCRLLTPPEAYYQQPGKEEQILAAGHKPGLLERQGILLDGDKDEFLLQVFTKSLFAEDTFFLELIQRQGATGFGQNNIRALWQSVQEEAARAQGA.

VOC domains follow at residues 7 to 135 (RLCH…LLQR) and 160 to 328 (HVDH…VFTK). The Fe cation site is built by His163, His258, and Glu339.

Belongs to the 4HPPD family. The cofactor is Fe cation.

The protein resides in the mitochondrion. The catalysed reaction is 3-(4-hydroxyphenyl)pyruvate + O2 = (S)-4-hydroxymandelate + CO2. In terms of biological role, iron-dependent dioxygenase that catalyzes the conversion of 4-hydroxyphenylpyruvate (4-HPPA) to 4-hydroxymandelate (4-HMA) in the mitochondria, one of the steps in the biosynthesis of coenzyme Q10 from tyrosine. The chain is 4-hydroxyphenylpyruvate dioxygenase-like protein from Mus musculus (Mouse).